A 70-amino-acid polypeptide reads, in one-letter code: Conotoxin Pl171 (70 aa).

Residues 1–21 (MGMRMMFTMILLVVLVTTVVS) form the signal peptide. 2 disulfide bridges follow: cysteine 54–cysteine 61 and cysteine 55–cysteine 67. At phenylalanine 69 the chain carries Phenylalanine amide.

Belongs to the conotoxin A superfamily. Expressed by the venom duct.

It localises to the secreted. Its function is as follows. Probable neurotoxin with unknown target. Possibly targets ion channels. This is Conotoxin Pl171 from Conus planorbis (Planorbis cone).